A 149-amino-acid polypeptide reads, in one-letter code: UPF0178 protein lwe1471 (149 aa).

This sequence belongs to the UPF0178 family.

The protein is UPF0178 protein lwe1471 of Listeria welshimeri serovar 6b (strain ATCC 35897 / DSM 20650 / CCUG 15529 / CIP 8149 / NCTC 11857 / SLCC 5334 / V8).